The sequence spans 224 residues: dTTP/UTP pyrophosphatase (224 aa).

Catalysis depends on Asp77, which acts as the Proton acceptor.

The protein belongs to the Maf family. YhdE subfamily. The cofactor is a divalent metal cation.

The protein localises to the cytoplasm. It carries out the reaction dTTP + H2O = dTMP + diphosphate + H(+). The catalysed reaction is UTP + H2O = UMP + diphosphate + H(+). Its function is as follows. Nucleoside triphosphate pyrophosphatase that hydrolyzes dTTP and UTP. May have a dual role in cell division arrest and in preventing the incorporation of modified nucleotides into cellular nucleic acids. In Dehalococcoides mccartyi (strain CBDB1), this protein is dTTP/UTP pyrophosphatase.